The chain runs to 1508 residues: Pleiotropic ABC efflux transporter of multiple drugs CDR1 (1508 aa).

The tract at residues M1–E30 is disordered. Residues M1 to S524 are Cytoplasmic-facing. The ABC transporter 1 domain occupies D165–Q415. Residues I525–Y545 form a helical membrane-spanning segment. The Extracellular segment spans residues N546–A559. A helical transmembrane segment spans residues A560–F580. Residues E581 to E608 are Cytoplasmic-facing. The helical transmembrane segment at L609–F629 threads the bilayer. Over R630–P633 the chain is Extracellular. Residues G634–F654 traverse the membrane as a helical segment. Topologically, residues R655–S673 are cytoplasmic. Residues V674–W694 traverse the membrane as a helical segment. Topologically, residues C695 to N775 are extracellular. The helical transmembrane segment at L776–F796 threads the bilayer. Over N797–G1203 the chain is Cytoplasmic. The segment at K839–L860 is disordered. Basic and acidic residues predominate over residues A845 to L860. In terms of domain architecture, ABC transporter 2 spans F867–G1110. Residue G903–T910 coordinates ATP. Residues Y1204–F1224 traverse the membrane as a helical segment. The Extracellular segment spans residues H1225–S1239. A helical transmembrane segment spans residues M1240 to M1260. The Cytoplasmic segment spans residues Q1261–E1288. A helical membrane pass occupies residues I1289 to L1309. Over Y1310–M1326 the chain is Extracellular. The chain crosses the membrane as a helical span at residues W1327–F1347. Over M1348–F1362 the chain is Cytoplasmic. The chain crosses the membrane as a helical span at residues I1363–I1383. Over F1384 to N1475 the chain is Extracellular. A helical membrane pass occupies residues F1476 to L1496. Residues A1497–H1508 lie on the Cytoplasmic side of the membrane.

This sequence belongs to the ABC transporter superfamily.

The protein localises to the cell membrane. The catalysed reaction is fluconazole(in) + ATP + H2O = fluconazole(out) + ADP + phosphate + H(+). It carries out the reaction itraconazole(in) + ATP + H2O = itraconazole(out) + ADP + phosphate + H(+). The enzyme catalyses voriconazole(in) + ATP + H2O = voriconazole(out) + ADP + phosphate + H(+). Its activity is regulated as follows. The bis-benzodioxolylindolinone azoffluxin acts as an inhibitor of the transporter activity. Clorgyline analogs M19 and M25 inhibit the transcporter activity by uncoupling CDR1 ATPase activity from the active transport of substrates. Activity is also inhibited by beauvericin and oligomycin. In terms of biological role, pleiotropic ABC efflux transporter that confers resistance to numerous chemicals including itraconazole, fluconazole, voriconazole and posaconazole. This is Pleiotropic ABC efflux transporter of multiple drugs CDR1 from Candidozyma auris (Yeast).